The chain runs to 400 residues: tRNA(Ile)-lysidine synthase (400 aa).

Residue 25–30 (SGGVDS) coordinates ATP.

This sequence belongs to the tRNA(Ile)-lysidine synthase family.

It localises to the cytoplasm. The catalysed reaction is cytidine(34) in tRNA(Ile2) + L-lysine + ATP = lysidine(34) in tRNA(Ile2) + AMP + diphosphate + H(+). Its function is as follows. Ligates lysine onto the cytidine present at position 34 of the AUA codon-specific tRNA(Ile) that contains the anticodon CAU, in an ATP-dependent manner. Cytidine is converted to lysidine, thus changing the amino acid specificity of the tRNA from methionine to isoleucine. The sequence is that of tRNA(Ile)-lysidine synthase from Francisella philomiragia subsp. philomiragia (strain ATCC 25017 / CCUG 19701 / FSC 153 / O#319-036).